The primary structure comprises 65 residues: Large ribosomal subunit protein bL32 (65 aa).

This sequence belongs to the bacterial ribosomal protein bL32 family.

This Rickettsia prowazekii (strain Madrid E) protein is Large ribosomal subunit protein bL32 (rpmF).